Reading from the N-terminus, the 233-residue chain is DNA-directed RNA polymerase I subunit RPA34 (233 aa).

Ser10, Ser12, Ser14, and Ser60 each carry phosphoserine. The segment covering 179-191 has biased composition (basic and acidic residues); the sequence is DFHVAEEVKENKK. The segment at 179 to 233 is disordered; the sequence is DFHVAEEVKENKKEPKKRSHHDDEEESSEKKKKKKEKREKREKKDKKDKKKKHRD. The segment covering 208 to 233 has biased composition (basic residues); it reads KKKKKKEKREKREKKDKKDKKKKHRD.

It belongs to the eukaryotic RPA34 RNA polymerase subunit family. As to quaternary structure, component of the RNA polymerase I (Pol I) complex consisting of 14 subunits: RPA135, RPA190, RPC40, RPA14, RPB5, RPO26, RPA43, RPB8, RPA12, RPB10, RPC19, RPC10, RPA49 and RPA34. The complex is composed of a horseshoe-shaped core containing ten subunits (RPA135, RPA190, RPB5, RPO26, RPB8, RPB10, RPC10, RPA12, RPC19 and RPC40) where RPA135 and RPA190 form the DNA-binding cleft. Outside of the core, RPA14 and RPA43 form the stalk that mediates interactions with transcription initiation factors and newly synthesized RNA. Forms a TFIIF-like heterodimer with RPA49; the heterodimer formed by RPA34 and RPA49 can be dissociated from the Pol I core giving rise to a 12 subunit form A* of Pol I (formerly called pol A) that shows impaired transcript elongation activity and increased sensitivity to alpha-amanitin. The heterodimer formed by RPA34 and RPA49 stabilizes subunit RPA12 and stimulates RPA12-dependent RNA cleavage.

It localises to the nucleus. Its subcellular location is the nucleolus. In terms of biological role, DNA-dependent RNA polymerases catalyze the transcription of DNA into RNA using the four ribonucleoside triphosphates as substrates. Component of RNA polymerase I (Pol I) which synthesizes ribosomal RNA precursors. Besides, RNA polymerase I has intrinsic RNA cleavage activity. The heterodimer formed by RPA34 and RPA49 stimulates transcript elongation by Pol I. The polypeptide is DNA-directed RNA polymerase I subunit RPA34 (RPA34) (Saccharomyces cerevisiae (strain ATCC 204508 / S288c) (Baker's yeast)).